The chain runs to 480 residues: Aspartyl/glutamyl-tRNA(Asn/Gln) amidotransferase subunit B (480 aa).

This sequence belongs to the GatB/GatE family. GatB subfamily. In terms of assembly, heterotrimer of A, B and C subunits.

The catalysed reaction is L-glutamyl-tRNA(Gln) + L-glutamine + ATP + H2O = L-glutaminyl-tRNA(Gln) + L-glutamate + ADP + phosphate + H(+). It catalyses the reaction L-aspartyl-tRNA(Asn) + L-glutamine + ATP + H2O = L-asparaginyl-tRNA(Asn) + L-glutamate + ADP + phosphate + 2 H(+). Allows the formation of correctly charged Asn-tRNA(Asn) or Gln-tRNA(Gln) through the transamidation of misacylated Asp-tRNA(Asn) or Glu-tRNA(Gln) in organisms which lack either or both of asparaginyl-tRNA or glutaminyl-tRNA synthetases. The reaction takes place in the presence of glutamine and ATP through an activated phospho-Asp-tRNA(Asn) or phospho-Glu-tRNA(Gln). The sequence is that of Aspartyl/glutamyl-tRNA(Asn/Gln) amidotransferase subunit B from Streptococcus agalactiae serotype III (strain NEM316).